A 278-amino-acid chain; its full sequence is Protein lyl-1 (278 aa).

Positions 1-46 (MCPPQARAEVGSAMTEKTEMVCASSPAPAPPSKPASPGPLSTEEVD) are disordered. Residues 27–37 (APAPPSKPASP) are compositionally biased toward pro residues. A bHLH domain is found at 149–201 (ARRVFTNSRERWRQQHVNGAFAELRKLLPTHPPDRKLSKNEVLRLAMKYIGFL). A disordered region spans residues 212-278 (LTSGPSAPGS…EQTSLSPEVR (67 aa)). Polar residues predominate over residues 269–278 (EQTSLSPEVR). The residue at position 274 (Ser-274) is a Phosphoserine.

As to quaternary structure, efficient DNA binding requires dimerization with another bHLH protein.

The protein localises to the nucleus. The sequence is that of Protein lyl-1 (Lyl1) from Mus musculus (Mouse).